The sequence spans 441 residues: ATP-dependent RNA helicase SUB2 (441 aa).

Residues 1 to 17 (MSHEGEEELLDYSDSEE) show a composition bias toward acidic residues. Positions 1–47 (MSHEGEEELLDYSDSEEIALPSTTVESGSNGDAKAETTTVKEENTEQ) are disordered. Polar residues predominate over residues 21 to 30 (PSTTVESGSN). The segment covering 33-46 (AKAETTTVKEENTE) has biased composition (basic and acidic residues). Residues 57 to 85 (TGFRDFLLKPELLRAIVDCGFEHPSEVQQ) carry the Q motif motif. The Helicase ATP-binding domain maps to 88 to 263 (IPQSILGTDV…KKFMSSPLEI (176 aa)). Residue 101–108 (AKAGVGKT) participates in ATP binding. A DECD box motif is present at residues 210-213 (DECD). The region spanning 275–436 (GLQQYYVDVE…PYPAEGVDPS (162 aa)) is the Helicase C-terminal domain.

Belongs to the DEAD box helicase family. DECD subfamily.

Its subcellular location is the nucleus. It carries out the reaction ATP + H2O = ADP + phosphate + H(+). In terms of biological role, ATP-binding RNA helicase involved in transcription elongation and required for the export of mRNA out of the nucleus. SUB2 also plays a role in pre-mRNA splicing and spliceosome assembly. May be involved in rDNA and telomeric silencing, and maintenance of genome integrity. This Yarrowia lipolytica (strain CLIB 122 / E 150) (Yeast) protein is ATP-dependent RNA helicase SUB2 (SUB2).